A 238-amino-acid polypeptide reads, in one-letter code: Adenylate dimethylallyltransferase (238 aa).

The protein belongs to the isopentenyl transferase family.

The enzyme catalyses dimethylallyl diphosphate + AMP = N(6)-(dimethylallyl)adenosine 5'-phosphate + diphosphate. In terms of biological role, transfers dimethylallyl groups to AMP as part of the biosynthesis of cytokinin phytohormones. This is Adenylate dimethylallyltransferase (tzs) from Ralstonia nicotianae (strain ATCC BAA-1114 / GMI1000) (Ralstonia solanacearum).